Consider the following 499-residue polypeptide: Maturase K (499 aa).

This sequence belongs to the intron maturase 2 family. MatK subfamily.

Its subcellular location is the plastid. It is found in the chloroplast. Usually encoded in the trnK tRNA gene intron. Probably assists in splicing its own and other chloroplast group II introns. This Gleditsia triacanthos (Common honey-locust) protein is Maturase K.